Here is a 280-residue protein sequence, read N- to C-terminus: 4-diphosphocytidyl-2-C-methyl-D-erythritol kinase (280 aa).

Residue K8 is part of the active site. An ATP-binding site is contributed by 91 to 101 (PVAAGLAGGST). Residue D133 is part of the active site.

The protein belongs to the GHMP kinase family. IspE subfamily.

It carries out the reaction 4-CDP-2-C-methyl-D-erythritol + ATP = 4-CDP-2-C-methyl-D-erythritol 2-phosphate + ADP + H(+). It functions in the pathway isoprenoid biosynthesis; isopentenyl diphosphate biosynthesis via DXP pathway; isopentenyl diphosphate from 1-deoxy-D-xylulose 5-phosphate: step 3/6. Its function is as follows. Catalyzes the phosphorylation of the position 2 hydroxy group of 4-diphosphocytidyl-2C-methyl-D-erythritol. The polypeptide is 4-diphosphocytidyl-2-C-methyl-D-erythritol kinase (Clostridium botulinum (strain Loch Maree / Type A3)).